A 222-amino-acid chain; its full sequence is Large ribosomal subunit protein mL64 (222 aa).

2 disordered regions span residues Leu14 to Pro40 and Lys188 to Ser222. Residues Glu144 to Asp213 are a coiled coil. Positions Lys184–Glu200 match the Nuclear localization signal motif. The segment covering Lys188–Ala201 has biased composition (basic and acidic residues). A compositionally biased stretch (low complexity) spans Arg202 to Ala216.

Belongs to the mitochondrion-specific ribosomal protein mL64 family. As to quaternary structure, component of the mitochondrial ribosome large subunit (39S) which comprises a 16S rRNA and about 50 distinct proteins. Interacts with GADD45A, GADD45B and GADD45G. Interacts with NR4A1 via the NR4A1 AB domain. Interacts with ATAD3A and ATAD3B.

The protein resides in the mitochondrion. The protein localises to the nucleus. In terms of biological role, acts as a negative regulator of G1 to S cell cycle phase progression by inhibiting cyclin-dependent kinases. Inhibitory effects are additive with GADD45 proteins but also occur in the absence of GADD45 proteins. Acts as a repressor of the orphan nuclear receptor NR4A1 by inhibiting AB domain-mediated transcriptional activity. May be involved in the hormone-mediated regulation of NR4A1 transcriptional activity. May play a role in mitochondrial protein synthesis. This is Large ribosomal subunit protein mL64 (GADD45GIP1) from Chlorocebus aethiops (Green monkey).